Consider the following 379-residue polypeptide: Alcohol dehydrogenase 2 (379 aa).

8 residues coordinate Zn(2+): C47, T49, H69, C99, C102, C105, C113, and C177. T49 and H69 together coordinate an alcohol. T49 lines the NAD(+) pocket. Residues 202 to 207 (GLGAVG), D226, K231, T272, V295, 295 to 297 (VGV), F322, and R372 contribute to the NAD(+) site.

Belongs to the zinc-containing alcohol dehydrogenase family. In terms of assembly, homodimer. The cofactor is Zn(2+).

It is found in the cytoplasm. The enzyme catalyses a primary alcohol + NAD(+) = an aldehyde + NADH + H(+). It carries out the reaction a secondary alcohol + NAD(+) = a ketone + NADH + H(+). This Oryza sativa subsp. indica (Rice) protein is Alcohol dehydrogenase 2 (ADH2).